Here is a 547-residue protein sequence, read N- to C-terminus: MYDITLAAVSIGLFFYVGARAVLKCLFPRQTSFPKHVPVVGVRDEMLSITRASLRQLTNGITTLLDGYSKHGQRNRPFVLYDPSAQPELLLPVQHIRWFSEQPDSKLSSHGVRQERHAVRYLHMGDQVELESTTRFIRYASNDRLNRHLENLQGLLHDEVRRSVDCVFGSQRQAQDDHWKEINLYGAMQDLVFPIMCRVFLGKELGESDEERGRVLTVFRRYLMAMGISTIFIGELPRLLKGVVARVVRIPLAYYRSQTLRMLVPLVRSQLSRTKHDEDDDDERGSDFIKHCANLSTKSTLSGTSSEAGPDLIAEWIMMLAGSLGFAGSSSTIIQATNLILDLVNTPPELLALQQLRHEAERTLQDDSNWTQAASFRQQKLADSAIRESLRLHPILIKGLTKEVVTPNGLELPDDENTTIPMGSWVGVPVLGIHQDERFYPQASEYRPFRFVEQAEAARTQAGGGSYEDAPEAAKPTTTYLGFGYGRHACPGRWFAVLMLKMILSYVLLHYDVESTGPAPKTRVLGDAALPPFRATIRVRKRKLGSE.

Residues aspartate 3–leucine 23 traverse the membrane as a helical segment. Cysteine 490 contributes to the heme binding site.

Belongs to the cytochrome P450 family. Heme is required as a cofactor.

It is found in the membrane. The enzyme catalyses isomotiol + reduced [NADPH--hemoprotein reductase] + O2 = 2alpha-hydroxyisomotiol + oxidized [NADPH--hemoprotein reductase] + H2O + H(+). It functions in the pathway secondary metabolite biosynthesis; terpenoid biosynthesis. Its function is as follows. Cytochrome P450 monooxygenase; part of the gene cluster that mediates the biosynthesis of the enfumafungin-type antibiotic, fuscoatroside. Within the pathway, fsoD catalyzes the hydroxylation at position C2 of isomotiol to produce 2-alpha-hydroxy-isomotiol. FsoD may also hydroxylate the intermediates 3-O-(beta-D-glucopyranosyl)-isomotiol and 2-deacetoxy-fuscoatroside at the same position C2. The fuscoatroside biosynthesis is initiated by the cyclization of 2,3(S)-oxidosqualene through FsoA's terpene cyclase (TC) domain, leading to the formation of the fernane skeleton isomotiol, harboring a fernane triterpene skeleton with a C8-C9 double bond. Subsequently, C2-alpha-hydroxylation mediated by fsoD results in the production of 2-alpha-hydroxy-isomotiol, which is further acetylated by fsoF. The glycosyltransferase (GT) domain of FsoA may convert isomotiol, 2-alpha-hydroxy-isomotiol, and the acetylated derivative of 2-alpha-hydroxy-isomotiol into their corresponding glycosides 3-O-(beta-D-glucopyranosyl)-isomotiol, 3-O-(beta-D-glucopyranosyl)-2-alpha-hydroxy-isomotiol, and 3-O-(beta-D-glucopyranosyl)-2-alpha-acetoxy-isomotiol, which then undergo oxidative cleavage under the action of fsoE to form s 2-deacetoxy-fuscoatroside, 2-deacetyl-fuscoatroside, and fuscoatroside, respectively. Although hydroxylation followed by acetylation of 3-O-(beta-D-glucopyranosyl)-isomotiol and 2-deacetoxy-fuscoatroside by fsoD and fsoF could not be ruled out, this process is likely to occur with difficulty due to bulky steric hindrance caused by the presence of a glycan at C3 in these compounds. Interestingly, fsoE can also utilize the aglycones isomotiol and 2-alpha-hydroxy-isomotiol as substrates to generate 19-beta-hydroxy-isomotiol and 2-alpha,19-beta-dihydroxy-isomotiol, respectively. These reactions occur with lower efficiency. Finally, fsoE can further convert 2-alpha,19-beta-dihydroxy-isomotiol into 2-alpha-hydroxy-ismotiol-19-one and 2-alpha-hydroxy-ismotiol-19-one into 2-deacetyl-3-deglucopyranosyl-fuscoatroside. The protein is Cytochrome P450 monooxygenase fsoD of Humicola fuscoatra.